The following is a 75-amino-acid chain: U9-theraphotoxin-Cg1a (75 aa).

The N-terminal stretch at 1–21 (MKTLVLFIIFGLAALFLLSSA) is a signal peptide. A propeptide spanning residues 22–29 (NELEETER) is cleaved from the precursor. 3 cysteine pairs are disulfide-bonded: Cys31–Cys46, Cys38–Cys51, and Cys45–Cys58.

This sequence belongs to the neurotoxin 10 (Hwtx-1) family. 43 (Jztx-49) subfamily. As to expression, expressed by the venom gland.

The protein localises to the secreted. Functionally, probable ion channel inhibitor. This is U9-theraphotoxin-Cg1a from Chilobrachys guangxiensis (Chinese earth tiger tarantula).